Here is an 88-residue protein sequence, read N- to C-terminus: Small ribosomal subunit protein uS15c (88 aa).

The protein belongs to the universal ribosomal protein uS15 family. Part of the 30S ribosomal subunit.

The protein resides in the plastid. It is found in the chloroplast. The protein is Small ribosomal subunit protein uS15c (rps15) of Lobularia maritima (Sweet alyssum).